The sequence spans 183 residues: Protein jagunal homolog 1-B (183 aa).

Residues 1–39 (MASRAGPRATGTDGSDYQHRERVASHYQMSVALKSEIKK) are Cytoplasmic-facing. The chain crosses the membrane as a helical span at residues 40–60 (LNIAHAVVWFLVAAQVLVSQL). Over 61 to 71 (NLVSHKVVASP) the chain is Lumenal. A helical transmembrane segment spans residues 72–92 (YQWEYTYLLSIIPTVFSFMAL). Residues 93-99 (PKNNISY) lie on the Cytoplasmic side of the membrane. Residues 100–120 (LVISMISGGLFCIGPILYGGM) form a helical membrane-spanning segment. Residues 121–137 (EMFPVAQQLYRHGKAYR) are Lumenal-facing. The chain crosses the membrane as a helical span at residues 138 to 158 (FIFGFSAVSIMYLVLIISVQV). The Cytoplasmic segment spans residues 159–183 (HGWQIYYSKKLLDAWFTNTQDKKKK).

This sequence belongs to the jagunal family.

The protein resides in the endoplasmic reticulum membrane. Its function is as follows. Endoplasmic reticulum transmembrane protein involved in vesicle-mediated transport, which is required for neutrophil function. The polypeptide is Protein jagunal homolog 1-B (jagn1b) (Danio rerio (Zebrafish)).